The chain runs to 317 residues: Pyridoxal 5'-phosphate synthase subunit PdxS (317 aa).

Residue Asp47 coordinates D-ribose 5-phosphate. Lys104 functions as the Schiff-base intermediate with D-ribose 5-phosphate in the catalytic mechanism. Residue Gly176 coordinates D-ribose 5-phosphate. Position 188 (Arg188) interacts with D-glyceraldehyde 3-phosphate. Residues Gly237 and 258-259 (GS) contribute to the D-ribose 5-phosphate site.

This sequence belongs to the PdxS/SNZ family. In terms of assembly, in the presence of PdxT, forms a dodecamer of heterodimers.

The catalysed reaction is aldehydo-D-ribose 5-phosphate + D-glyceraldehyde 3-phosphate + L-glutamine = pyridoxal 5'-phosphate + L-glutamate + phosphate + 3 H2O + H(+). It participates in cofactor biosynthesis; pyridoxal 5'-phosphate biosynthesis. Its function is as follows. Catalyzes the formation of pyridoxal 5'-phosphate from ribose 5-phosphate (RBP), glyceraldehyde 3-phosphate (G3P) and ammonia. The ammonia is provided by the PdxT subunit. Can also use ribulose 5-phosphate and dihydroxyacetone phosphate as substrates, resulting from enzyme-catalyzed isomerization of RBP and G3P, respectively. This chain is Pyridoxal 5'-phosphate synthase subunit PdxS, found in Corynebacterium glutamicum (strain ATCC 13032 / DSM 20300 / JCM 1318 / BCRC 11384 / CCUG 27702 / LMG 3730 / NBRC 12168 / NCIMB 10025 / NRRL B-2784 / 534).